A 457-amino-acid polypeptide reads, in one-letter code: GTPase Der (457 aa).

EngA-type G domains lie at 4 to 169 (PTIA…PENN) and 177 to 352 (IMMS…NQHR). Residues 10 to 17 (GRPNVGKS), 57 to 61 (DTGGL), 120 to 123 (NKCE), 183 to 190 (GRPNVGKS), 230 to 234 (DTAGI), and 295 to 298 (NKWD) contribute to the GTP site. The KH-like domain maps to 353-438 (RRVTTSVVNE…PLILLWRGKQ (86 aa)).

The protein belongs to the TRAFAC class TrmE-Era-EngA-EngB-Septin-like GTPase superfamily. EngA (Der) GTPase family. As to quaternary structure, associates with the 50S ribosomal subunit.

In terms of biological role, GTPase that plays an essential role in the late steps of ribosome biogenesis. The chain is GTPase Der from Prochlorococcus marinus (strain MIT 9215).